A 160-amino-acid chain; its full sequence is Transmembrane protein 191A (160 aa).

A helical membrane pass occupies residues 24–44; it reads FCFPLDFVSNLFWIFASKFII.

This sequence belongs to the TMEM191 family.

It localises to the membrane. This chain is Transmembrane protein 191A (TMEM191A), found in Homo sapiens (Human).